The sequence spans 426 residues: Histidine--tRNA ligase (426 aa).

This sequence belongs to the class-II aminoacyl-tRNA synthetase family.

The protein resides in the cytoplasm. The enzyme catalyses tRNA(His) + L-histidine + ATP = L-histidyl-tRNA(His) + AMP + diphosphate + H(+). This is Histidine--tRNA ligase from Saccharolobus shibatae (strain ATCC 51178 / DSM 5389 / JCM 8931 / NBRC 15437 / B12) (Sulfolobus shibatae).